The following is a 388-amino-acid chain: MRYLTAGESHGPRLTAIIEGVPAGLPLTADYINAELKRRQGGYGRGARMKIESDQVEITSGVRHGLTMGGPITLNVTNLDHQKWQEIMSAADVDEKKKGLRKITKPRPGHADLVGGMKYRFDDLRNSLERSSARETTMRVAVGAVAKRLLEEIGVEVASHIVTFGGIDINVPNNLTVGEIKERAAQSEVSIVNPDREEEIKAYIDQIKKDGDTIGGVIETVVGGVPVGLGSYVQWDKKLDAKIAQGVVSINAFKGVEFGVGFEAGRLKGSQVMDEILWSEEDGFTRRTNNLGGFEGGMTNGQPIVVRGVMKPIPTLYKPLMSVDIETHEPYKATVERSDPTALPAAGVVMESVVATVLATEVLEKFSSDNLEELKDAVARHREFVKNF.

R39 and R45 together coordinate NADP(+). FMN-binding positions include 130 to 132 (RSS), 251 to 252 (NA), G296, 311 to 315 (KPIPT), and R337.

The protein belongs to the chorismate synthase family. As to quaternary structure, homotetramer. FMNH2 serves as cofactor.

The enzyme catalyses 5-O-(1-carboxyvinyl)-3-phosphoshikimate = chorismate + phosphate. It participates in metabolic intermediate biosynthesis; chorismate biosynthesis; chorismate from D-erythrose 4-phosphate and phosphoenolpyruvate: step 7/7. Catalyzes the anti-1,4-elimination of the C-3 phosphate and the C-6 proR hydrogen from 5-enolpyruvylshikimate-3-phosphate (EPSP) to yield chorismate, which is the branch point compound that serves as the starting substrate for the three terminal pathways of aromatic amino acid biosynthesis. This reaction introduces a second double bond into the aromatic ring system. The sequence is that of Chorismate synthase from Streptococcus sanguinis (strain SK36).